Consider the following 425-residue polypeptide: Histidine--tRNA ligase (425 aa).

This sequence belongs to the class-II aminoacyl-tRNA synthetase family. Homodimer.

The protein resides in the cytoplasm. The catalysed reaction is tRNA(His) + L-histidine + ATP = L-histidyl-tRNA(His) + AMP + diphosphate + H(+). The polypeptide is Histidine--tRNA ligase (Erwinia tasmaniensis (strain DSM 17950 / CFBP 7177 / CIP 109463 / NCPPB 4357 / Et1/99)).